A 105-amino-acid polypeptide reads, in one-letter code: Translation initiation factor 1A 2 (105 aa).

The tract at residues 1–22 (MRKRREGSAAPSTQEVTRVRTP) is disordered. The S1-like domain maps to 17–91 (TRVRTPRKEN…TKADVIWKYT (75 aa)).

This sequence belongs to the eIF-1A family.

Seems to be required for maximal rate of protein biosynthesis. Enhances ribosome dissociation into subunits and stabilizes the binding of the initiator Met-tRNA(I) to 40 S ribosomal subunits. The sequence is that of Translation initiation factor 1A 2 (eIF1A2) from Methanosarcina acetivorans (strain ATCC 35395 / DSM 2834 / JCM 12185 / C2A).